Reading from the N-terminus, the 654-residue chain is Protein THALLO (654 aa).

Over residues 1–16 (MGKKGGTLKRSSKSTK) the composition is skewed to basic residues. Disordered stretches follow at residues 1-23 (MGKK…DIVE), 35-145 (KQRD…SDDE), and 164-212 (SITA…KDTH). The Nuclear localization signal 1 motif lies at 2–9 (GKKGGTLK). 3 stretches are compositionally biased toward acidic residues: residues 44 to 56 (VNDD…EDDV), 64 to 82 (GVDD…EEAE), and 103 to 114 (GDDEMADDDKDK). A coiled-coil region spans residues 140–160 (LSSDDEDIKAEEEEVIRLRAE). The span at 171–181 (GLDDDSEEDSD) shows a compositional bias: acidic residues. Residues 182–212 (RELTMEEISDKGKQATKSITDKKEKGDKDTH) are compositionally biased toward basic and acidic residues. Residues 243–263 (LSELNDAVEELESKINPVMNK) are a coiled coil. Disordered stretches follow at residues 362–397 (SDSV…HQND), 470–492 (VSTK…DDIG), and 509–654 (KSSE…SIRM). Basic and acidic residues predominate over residues 364–387 (SVDRITQDTAKPMKIDNAREEKKK). A compositionally biased stretch (acidic residues) spans 524–546 (SDDEDDNDGDNNDMVDNDGESED). The span at 552 to 561 (VKQKQQAKRA) shows a compositional bias: basic residues. Polar residues predominate over residues 588 to 599 (SNQMVSNRGLTR). A Nuclear localization signal 2 motif is present at residues 608–615 (PRKKYRKN). Over residues 645-654 (NPNTSRSIRM) the composition is skewed to polar residues.

The protein belongs to the SAS10 family. In terms of assembly, interacts with NUCL1, NUCL2, JMJ14, NOF1 and MPP10 in the nucleus. As to expression, mainly present in tissues undergoing rapid cellular growth and differentiation. Mostly expressed in shoots and flowers, and, to a lower extent, in leaves, siliques, roots and seedlings.

The protein localises to the nucleus. The protein resides in the nucleolus. Functionally, essential protein during embryogenesis. Involved both in gene transcription regulation and in processing events critical for proper rRNA biogenesis and nucleolar organization during reproduction; contributes to pre-rRNA processing at the 5' external transcribed spacer. Binds RNA. The sequence is that of Protein THALLO from Arabidopsis thaliana (Mouse-ear cress).